A 269-amino-acid chain; its full sequence is Glutamate racemase (269 aa).

Substrate is bound by residues 11-12 (DS) and 43-44 (YG). Residue C74 is the Proton donor/acceptor of the active site. 75 to 76 (NT) is a substrate binding site. C185 (proton donor/acceptor) is an active-site residue. Substrate is bound at residue 186–187 (TH).

Belongs to the aspartate/glutamate racemases family.

The enzyme catalyses L-glutamate = D-glutamate. The protein operates within cell wall biogenesis; peptidoglycan biosynthesis. Provides the (R)-glutamate required for cell wall biosynthesis. This chain is Glutamate racemase, found in Bacillus cereus (strain G9842).